The following is a 74-amino-acid chain: U19-theraphotoxin-Cg1a (74 aa).

The first 7 residues, 1-7 (IMFVWAS), serve as a signal peptide directing secretion. A propeptide spanning residues 8 to 36 (AAEVEERGSDQRDSPASLKSMETIFQSEQ) is cleaved from the precursor. Intrachain disulfides connect cysteine 39/cysteine 53, cysteine 46/cysteine 58, and cysteine 52/cysteine 66.

The protein belongs to the neurotoxin 10 (Hwtx-1) family. 38 (Jztx-33) subfamily. In terms of tissue distribution, expressed by the venom gland.

It is found in the secreted. In terms of biological role, probable ion channel inhibitor. The protein is U19-theraphotoxin-Cg1a of Chilobrachys guangxiensis (Chinese earth tiger tarantula).